Reading from the N-terminus, the 512-residue chain is Protein arginine N-methyltransferase 2 (512 aa).

The segment at T67–D103 is disordered. Residues T88–Q99 show a composition bias toward low complexity. In terms of domain architecture, SAM-dependent MTase PRMT-type spans D120–Q508. Residues H133, R142, G166, and E217 each coordinate S-adenosyl-L-methionine. Residues E231 and E240 contribute to the active site. The disordered stretch occupies residues D375–K395.

This sequence belongs to the class I-like SAM-binding methyltransferase superfamily. Protein arginine N-methyltransferase family.

The protein resides in the cytoplasm. The protein localises to the nucleus. It catalyses the reaction L-arginyl-[protein] + 2 S-adenosyl-L-methionine = N(omega),N(omega)-dimethyl-L-arginyl-[protein] + 2 S-adenosyl-L-homocysteine + 2 H(+). Arginine methyltransferase that methylates the guanidino nitrogens of arginyl residues in some proteins such as histones. The sequence is that of Protein arginine N-methyltransferase 2 (prmt2) from Dictyostelium discoideum (Social amoeba).